Reading from the N-terminus, the 1319-residue chain is DNA (cytosine-5)-methyltransferase CMT2 (1319 aa).

The span at 1-15 shows a compositional bias: pro residues; that stretch reads METPPPDPVSPPPPA. Disordered stretches follow at residues 1-34, 142-189, 265-302, and 442-468; these read METPPPDPVSPPPPAADEGSPGGDDGAEDAGGFS, ALDS…VASS, SAASSMPLNQNGDSSRASKRRVADSRKSRSSEGSKLPA, and KSRVVSKTPQGRGRRSPQPPKTQRART. The segment covering 266–279 has biased composition (polar residues); it reads AASSMPLNQNGDSS. Basic and acidic residues predominate over residues 285 to 296; it reads RVADSRKSRSSE. A BAH domain is found at 602-719; it reads YTFCIGECAF…IDYSTFSTIE (118 aa). An SAM-dependent MTase C5-type domain is found at 758–1296; sequence LSLLDLYCGC…YALAMAYLKK (539 aa). Residues 863–928 enclose the Chromo domain; the sequence is FEVWKLVDIC…EGHRQRILPR (66 aa). Cysteine 941 is an active-site residue.

Its subcellular location is the nucleus. It catalyses the reaction a 2'-deoxycytidine in DNA + S-adenosyl-L-methionine = a 5-methyl-2'-deoxycytidine in DNA + S-adenosyl-L-homocysteine + H(+). Functionally, involved in CpXpG DNA methylation. In Oryza sativa subsp. japonica (Rice), this protein is DNA (cytosine-5)-methyltransferase CMT2.